We begin with the raw amino-acid sequence, 439 residues long: Methionine aminopeptidase 2-2 (439 aa).

The tract at residues 1-90 (MAAQAPPTDE…SQLFPDKQYP (90 aa)) is disordered. The span at 10 to 23 (ELSKLSVEDADNKP) shows a compositional bias: basic and acidic residues. The span at 35–45 (DEDDSEDDAED) shows a compositional bias: acidic residues. Positions 54-68 (AKKKKKRKPRKKKKN) are enriched in basic residues. A substrate-binding site is contributed by His192. 3 residues coordinate a divalent metal cation: Asp212, Asp223, and His292. His300 is a binding site for substrate. 2 residues coordinate a divalent metal cation: Glu325 and Glu420.

Belongs to the peptidase M24A family. Methionine aminopeptidase eukaryotic type 2 subfamily. Requires Co(2+) as cofactor. The cofactor is Zn(2+). It depends on Mn(2+) as a cofactor. Fe(2+) is required as a cofactor.

It is found in the cytoplasm. The catalysed reaction is Release of N-terminal amino acids, preferentially methionine, from peptides and arylamides.. Cotranslationally removes the N-terminal methionine from nascent proteins. The N-terminal methionine is often cleaved when the second residue in the primary sequence is small and uncharged (Met-Ala-, Cys, Gly, Pro, Ser, Thr, or Val). This Chaetomium globosum (strain ATCC 6205 / CBS 148.51 / DSM 1962 / NBRC 6347 / NRRL 1970) (Soil fungus) protein is Methionine aminopeptidase 2-2.